The chain runs to 147 residues: uncharacterized protein (147 aa).

The HTH marR-type domain maps to 1-137; that stretch reads MRDNTIGSLI…LYELMTKVHK (137 aa). Residues 53 to 76 constitute a DNA-binding region (H-T-H motif); it reads QMELAEKVTVTQGGISRMLTRLEK.

This is an uncharacterized protein from Bacillus cereus (strain ATCC 14579 / DSM 31 / CCUG 7414 / JCM 2152 / NBRC 15305 / NCIMB 9373 / NCTC 2599 / NRRL B-3711).